Reading from the N-terminus, the 154-residue chain is Flagellar assembly factor FliW (154 aa).

The protein belongs to the FliW family. As to quaternary structure, interacts with translational regulator CsrA and flagellin(s).

The protein resides in the cytoplasm. Acts as an anti-CsrA protein, binds CsrA and prevents it from repressing translation of its target genes, one of which is flagellin. Binds to flagellin and participates in the assembly of the flagellum. The polypeptide is Flagellar assembly factor FliW (Carboxydothermus hydrogenoformans (strain ATCC BAA-161 / DSM 6008 / Z-2901)).